We begin with the raw amino-acid sequence, 188 residues long: Large ribosomal subunit protein eL18A (188 aa).

The tract at residues 153 to 188 (GKAPSTPHSRTKPYVLSKGRKFERARGRRASRGYKN) is disordered. A compositionally biased stretch (basic residues) spans 178–188 (RGRRASRGYKN).

It belongs to the eukaryotic ribosomal protein eL18 family. In terms of assembly, component of the large ribosomal subunit.

Its subcellular location is the cytoplasm. In terms of biological role, component of the large ribosomal subunit. The ribosome is a large ribonucleoprotein complex responsible for the synthesis of proteins in the cell. In Xenopus laevis (African clawed frog), this protein is Large ribosomal subunit protein eL18A (rpl18-a).